The primary structure comprises 379 residues: Pre-mRNA-processing protein 45 (379 aa).

Pro residues predominate over residues 1–10 (MFSNRLPPPK). Disordered stretches follow at residues 1–22 (MFSN…ALSS) and 353–379 (SEGA…NYGA). A compositionally biased stretch (basic and acidic residues) spans 368–379 (AESDDKSDNYGA).

The protein belongs to the SNW family. As to quaternary structure, belongs to the CWC complex (or CEF1-associated complex), a spliceosome sub-complex reminiscent of a late-stage spliceosome composed of the U2, U5 and U6 snRNAs and at least BUD13, BUD31, BRR2, CDC40, CEF1, CLF1, CUS1, CWC2, CWC15, CWC21, CWC22, CWC23, CWC24, CWC25, CWC27, ECM2, HSH155, IST3, ISY1, LEA1, MSL1, NTC20, PRP8, PRP9, PRP11, PRP19, PRP21, PRP22, PRP45, PRP46, SLU7, SMB1, SMD1, SMD2, SMD3, SMX2, SMX3, SNT309, SNU114, SPP2, SYF1, SYF2, RSE1 and YJU2. Interacts with CLF1, PRP22 and PRP46. Interacts with SPP382.

It localises to the nucleus. Involved in pre-mRNA splicing. Associated with the spliceosome throughout the splicing reactions, until after the second catalytic step. In Saccharomyces cerevisiae (strain ATCC 204508 / S288c) (Baker's yeast), this protein is Pre-mRNA-processing protein 45 (PRP45).